A 478-amino-acid chain; its full sequence is GDP-fucose protein O-fucosyltransferase 3 (478 aa).

Topologically, residues 1–9 (MVRIQRGKL) are cytoplasmic. The helical; Signal-anchor for type II membrane protein transmembrane segment at 10 to 30 (LAFCLCVMATVFLLITLQVVV) threads the bilayer. At 31–478 (ELGKFEGKKF…QEFWALVFKD (448 aa)) the chain is on the lumenal side. N-linked (GlcNAc...) asparagine glycosylation is found at Asn-110 and Asn-168. A disulfide bridge connects residues Cys-389 and Cys-392.

This sequence belongs to the glycosyltransferase 10 family.

Its subcellular location is the endoplasmic reticulum membrane. It catalyses the reaction L-threonyl-[protein] + GDP-beta-L-fucose = 3-O-(alpha-L-fucosyl)-L-threonyl-[protein] + GDP + H(+). It carries out the reaction L-seryl-[protein] + GDP-beta-L-fucose = 3-O-(alpha-L-fucosyl)-L-seryl-[protein] + GDP + H(+). It functions in the pathway protein modification; protein glycosylation. Protein O-fucosyltransferase that specifically catalyzes O-fucosylation of serine or threonine residues in EMI domains of target proteins, such as MMRN1, MMRN2 and EMID1. Attaches fucose through an O-glycosidic linkage. O-fucosylation of EMI domain-containing proteins may be required for facilitating protein folding and secretion. May also show alpha-(1,3)-fucosyltransferase activity toward the innermost N-acetyl glucosamine (GlcNAc) residue in biantennary N-glycan acceptors. However, this was tested with a library of synthetic substrates and this activity is unsure in vivo. May be involved in biosynthesis of Lewis X-carrying biantennary N-glycans that regulate neuron stem cell self-renewal during brain development. In Bos taurus (Bovine), this protein is GDP-fucose protein O-fucosyltransferase 3 (FUT10).